The chain runs to 335 residues: Nuclear transcription factor Y subunit gamma (335 aa).

Belongs to the NFYC/HAP5 subunit family. Heterotrimeric transcription factor composed of three components, NF-YA, NF-YB and NF-YC. NF-YB and NF-YC must interact and dimerize for NF-YA association and DNA binding.

It is found in the nucleus. Component of the sequence-specific heterotrimeric transcription factor (NF-Y) which specifically recognizes a 5'-CCAAT-3' box motif found in the promoters of its target genes. NF-Y can function as both an activator and a repressor, depending on its interacting cofactors. This is Nuclear transcription factor Y subunit gamma (NFYC) from Pongo abelii (Sumatran orangutan).